The chain runs to 339 residues: Cathepsin B (339 aa).

Residues 1–17 (MWQLWASLCCLLALADA) form the signal peptide. Positions 18-79 (RSRPSFHPLS…QRVMFTEDLK (62 aa)) are cleaved as a propeptide — activation peptide. Disulfide bonds link Cys-93/Cys-122, Cys-105/Cys-150, Cys-141/Cys-207, Cys-142/Cys-146, Cys-179/Cys-211, and Cys-187/Cys-198. The active site involves Cys-108. Asn-192 carries N-linked (GlcNAc...) asparagine glycosylation. Lys-220 is modified (N6-acetyllysine). Active-site residues include His-278 and Asn-298. The propeptide occupies 334 to 339 (QYWEKI).

Belongs to the peptidase C1 family. In terms of assembly, dimer of a heavy chain and a light chain cross-linked by a disulfide bond. Interacts with SRPX2. Directly interacts with SHKBP1.

Its subcellular location is the lysosome. The protein resides in the melanosome. It localises to the secreted. It is found in the extracellular space. The protein localises to the apical cell membrane. The catalysed reaction is Hydrolysis of proteins with broad specificity for peptide bonds. Preferentially cleaves -Arg-Arg-|-Xaa bonds in small molecule substrates (thus differing from cathepsin L). In addition to being an endopeptidase, shows peptidyl-dipeptidase activity, liberating C-terminal dipeptides.. Thiol protease which is believed to participate in intracellular degradation and turnover of proteins. Cleaves matrix extracellular phosphoglycoprotein MEPE. Involved in the solubilization of cross-linked TG/thyroglobulin in the thyroid follicle lumen. Has also been implicated in tumor invasion and metastasis. The chain is Cathepsin B (CTSB) from Pongo abelii (Sumatran orangutan).